The sequence spans 323 residues: Aquaporin NIP3-1 (323 aa).

M1 carries the N-acetylmethionine modification. The next 2 membrane-spanning stretches (helical) occupy residues 45 to 65 (LIGEFVGTFTMIFAGCSAIVV) and 73 to 93 (VTLPGIALVWGLVVTVMIYSI). Residues 102 to 104 (NPA) carry the NPA 1 motif. 3 helical membrane-spanning segments follow: residues 122–142 (GYIAAQLLGSTLAAAVLRLVF), 167–187 (TSFVMEFIATFNLMFVISAVA), and 196–216 (FAGIAIGATIVLDILFSGPIS). An NPA 2 motif is present at residues 221-223 (NPA). Residues 239–259 (WLYIVSPVIGALSGAWTYGLL) form a helical membrane-spanning segment.

The protein belongs to the MIP/aquaporin (TC 1.A.8) family. NIP (TC 1.A.8.12) subfamily.

The protein resides in the membrane. Aquaporins facilitate the transport of water and small neutral solutes across cell membranes. This Arabidopsis thaliana (Mouse-ear cress) protein is Aquaporin NIP3-1 (NIP3-1).